The primary structure comprises 1142 residues: Envelopment polyprotein (1142 aa).

An N-terminal signal peptide occupies residues 1–21 (MSKFCLCLSLLGVLLLQVCDT). Residues 22–489 (RSLLELKIEC…LCVPGIHGWS (468 aa)) lie on the Lumenal side of the membrane. 6 disulfides stabilise this stretch: Cys31–Cys156, Cys65–Cys162, Cys114–Cys133, Cys138–Cys143, Cys180–Cys190, and Cys215–Cys253. N-linked (GlcNAc...) asparagine; by host glycosylation is present at Asn139. An N-linked (GlcNAc...) asparagine; by host glycan is attached at Asn353. Disulfide bonds link Cys382–Cys441, Cys386–Cys395, Cys411–Cys430, and Cys458–Cys481. Asn405 is a glycosylation site (N-linked (GlcNAc...) asparagine; by host). A helical membrane pass occupies residues 490-510 (TIALLATFCFGWLLIPIISLV). The Cytoplasmic segment spans residues 511–633 (SIKIMLLFAY…LSVFRYRSRC (123 aa)). Positions 522–539 (CSKYSNDSKFRLLIEKVK) are binding to the ribonucleoprotein. 2 consecutive CCHC-type zinc fingers follow at residues 551-571 (CEVC…KKSC) and 576-597 (CPYC…FKVC). Binding to the ribonucleoprotein stretches follow at residues 594-611 (FKVC…RKSL), 598-609 (KLTTRFQENLRK), and 617-631 (KRGC…RYRS). The region spanning 617–640 (KRGCYRTLSVFRYRSRCFVGLVWC) is the ITAM domain. A YxxL motif is present at residues 621-624 (YRTL). Residues 634 to 654 (FVGLVWCILLVLELVIWAASA) traverse the membrane as a helical segment. Residues 655-1110 (DTVEIKTGWT…EWLMGILSGN (456 aa)) lie on the Lumenal side of the membrane. 8 cysteine pairs are disulfide-bonded: Cys741–Cys776, Cys745–Cys783, Cys757–Cys890, Cys771–Cys901, Cys786–Cys909, Cys812–Cys821, Cys829–Cys838, and Cys869–Cys873. Residues 763–783 (YEFETGWGCNPGDCPGVGTGC) form a fusion loop region. Residue Asn933 is glycosylated (N-linked (GlcNAc...) asparagine; by host). 5 cysteine pairs are disulfide-bonded: Cys975/Cys1005, Cys998/Cys1050, Cys1015/Cys1020, Cys1051/Cys1056, and Cys1090/Cys1094. Residues 1111 to 1131 (WMVVAVLVVLLILSIFLFSLC) form a helical membrane-spanning segment. Residues 1127–1142 (LFSLCCPRRVVHKKSS) form a binding to the ribonucleoprotein region. Residues 1132–1142 (CPRRVVHKKSS) are Cytoplasmic-facing.

It belongs to the hantavirus envelope glycoprotein family. Homodimer. Homotetramer; forms heterotetrameric Gn-Gc spikes in the pre-fusion conformation. Interacts (via C-terminus) with the nucleoprotein. Interacts with host TUFM; this interaction contributes to the virus-induced degradation of mitochondria by autophagy, which leads to degradation of host MAVS and inhibition of type I interferon (IFN) responses. Interacts with host MAP1LC3B; this interaction contributes to the virus-induced degradation of mitochondria by autophagy, which leads to degradation of host MAVS and inhibition of type I interferon (IFN) responses. In terms of assembly, homodimer. Homotetramer; forms heterotetrameric Gn-Gc spikes in the pre-fusion conformation. Homotrimer; forms homotrimer in the post-fusion conformation at acidic pH. Interacts (via C-terminus) with the nucleoprotein. Post-translationally, envelope polyprotein precursor is quickly cleaved in vivo just after synthesis, presumably by host signal peptidase.

The protein resides in the virion membrane. It localises to the host cell surface. It is found in the host Golgi apparatus membrane. The protein localises to the host endoplasmic reticulum membrane. Its subcellular location is the host mitochondrion. Forms homotetramers with glycoprotein C at the surface of the virion. Attaches the virion to host cell receptors including integrin alpha5/ITGB1. This attachment induces virion internalization predominantly through clathrin-dependent endocytosis. Mediates the assembly and budding of infectious virus particles through its interaction with the nucleocapsid protein and the viral genome. May dysregulate normal immune and endothelial cell responses through an ITAM motif. Translocates to mitochondria, binds to host TUFM and recruits MAP1LC3B. These interactions induce mitochondrial autophagy and therefore destruction of host MAVS leading to inhibition of type I interferon (IFN) responses. Concomitant breakdown of glycoprotein N is apparently prevented by the nucleoprotein that may inhibit Gn-stimulated autophagosome-lysosome fusion. Interacts with the viral genomic RNA. Its function is as follows. Forms homotetramers with glycoprotein N at the surface of the virion. Attaches the virion to host cell receptors including integrin ITGAV/ITGB3. This attachment induces virion internalization predominantly through clathrin-dependent endocytosis. Class II fusion protein that promotes fusion of viral membrane with host endosomal membrane after endocytosis of the virion. This chain is Envelopment polyprotein (GP), found in Microtus pennsylvanicus (Meadow vole).